The primary structure comprises 188 residues: MPLESIWADAPDEEPIKKQKPSHKRSNNNKKNNNSRWSNESSSNNKKKDSVNKVKNNKGNHESKTKNKIKETLPREKKPPHSQGKISPVSESLAINPFSQKATEISPPPVSPSKMKTTKTQSKQDTASKMKLLKKKIEEQREILQKTHHKNQQQQVLMDFLNDEGSSNWVDDDEEELILQRLKTSLKI.

Positions 1–128 (MPLESIWADA…KTQSKQDTAS (128 aa)) are disordered. The segment covering 18-28 (KQKPSHKRSNN) has biased composition (basic residues). Positions 29–44 (NKKNNNSRWSNESSSN) are enriched in low complexity. The segment covering 59 to 79 (GNHESKTKNKIKETLPREKKP) has biased composition (basic and acidic residues). A phosphoserine mark is found at Ser87, Ser106, and Ser111. The segment covering 112 to 128 (PSKMKTTKTQSKQDTAS) has biased composition (low complexity). Residues 119–164 (KTQSKQDTASKMKLLKKKIEEQREILQKTHHKNQQQQVLMDFLNDE) adopt a coiled-coil conformation.

Interacts with GLE1, NUP42, NAB2, ZDS1 and probably DBP5. Forms a complex with GLE1 and NAB2.

It is found in the cytoplasm. It localises to the nucleus. The protein resides in the nuclear pore complex. Its subcellular location is the nucleus membrane. High-copy suppressor of mutant alleles of ATP-dependent RNA helicase DBP5, which is involved in mRNA export from the nucleus. It may also play an important role in a late stage of NAB2-mRNA export. This Saccharomyces cerevisiae (strain ATCC 204508 / S288c) (Baker's yeast) protein is mRNA transport factor GFD1 (GFD1).